Reading from the N-terminus, the 163-residue chain is MISKIKELFASFMLLELVKGMALTGRYFFARKVTVQFPEERTPISPRFRGLHALRRYPNGEERCIACKLCEAVCPAMAITIESEQREDNTRRTTRYDIDLTKCIFCGFCEESCPVDSIVETRIFDYHGEKRGDLIYTKPMLLAVGDKYEEQIAADRAADARYR.

4Fe-4S ferredoxin-type domains lie at 54–84 (LRRY…IESE) and 94–123 (TRYD…ETRI). Positions 64, 67, 70, 74, 103, 106, 109, and 113 each coordinate [4Fe-4S] cluster.

The protein belongs to the complex I 23 kDa subunit family. As to quaternary structure, NDH-1 is composed of 14 different subunits. Subunits NuoA, H, J, K, L, M, N constitute the membrane sector of the complex. [4Fe-4S] cluster is required as a cofactor.

It localises to the cell inner membrane. The enzyme catalyses a quinone + NADH + 5 H(+)(in) = a quinol + NAD(+) + 4 H(+)(out). NDH-1 shuttles electrons from NADH, via FMN and iron-sulfur (Fe-S) centers, to quinones in the respiratory chain. The immediate electron acceptor for the enzyme in this species is believed to be ubiquinone. Couples the redox reaction to proton translocation (for every two electrons transferred, four hydrogen ions are translocated across the cytoplasmic membrane), and thus conserves the redox energy in a proton gradient. This Methylobacillus flagellatus (strain ATCC 51484 / DSM 6875 / VKM B-1610 / KT) protein is NADH-quinone oxidoreductase subunit I.